Here is a 1112-residue protein sequence, read N- to C-terminus: cGMP-inhibited 3',5'-cyclic phosphodiesterase 3B (1112 aa).

The segment covering 1–10 (MRRDERDAKA) has biased composition (basic and acidic residues). Residues 1-25 (MRRDERDAKAMRSLQPPDGAGSPPE) are interaction with RAPGEF3. Positions 1-26 (MRRDERDAKAMRSLQPPDGAGSPPES) are disordered. The residue at position 13 (S13) is a Phosphoserine. A run of 6 helical transmembrane segments spans residues 88–108 (FVLA…AAWL), 117–137 (HSLS…CFLT), 152–172 (WWLL…WQWW), 192–212 (AAAG…TLAH), 220–240 (VLVL…LGSL), and 247–267 (LLSG…DHFF). S295 bears the Phosphoserine; by PKB/AKT1 or PKB/AKT2 mark. A phosphoserine mark is found at S296 and S442. Residues 418 to 471 (EKGDRKLNKGLNRNSLPTPQLRRSSGTSGLLPVEQSSRWDRNNGKRPHQEFGIS) form a disordered region. Positions 428–445 (LNRNSLPTPQLRRSSGTS) are enriched in polar residues. The interaction with PIK3R6 stretch occupies residues 436–460 (PQLRRSSGTSGLLPVEQSSRWDRNN). Positions 454–466 (SRWDRNNGKRPHQ) are enriched in basic and acidic residues. The 429-residue stretch at 651 to 1079 (TNIEQEVSLD…KIWKEIVEEE (429 aa)) folds into the PDEase domain. Residue H737 is the Proton donor of the active site. H737 is a binding site for AMP. Mg(2+) is bound by residues H741, H821, D822, and D937. Positions 822, 937, and 988 each coordinate AMP. Composition is skewed to acidic residues over residues 1017–1041 (EEDN…EEME) and 1103–1112 (QVIEEADEEE). Disordered regions lie at residues 1017–1051 (EEDN…PPRR) and 1092–1112 (ENSS…DEEE).

This sequence belongs to the cyclic nucleotide phosphodiesterase family. PDE3 subfamily. As to quaternary structure, homodimer. Interacts with PIK3CG; regulates PDE3B activity and thereby cAMP levels in cells. Interacts with RAPGEF3 and PIK3R6; form a signaling complex that regulates phosphatidylinositol 3-kinase gamma in angiogenesis. Interacts with ABHD15; this interaction regulates PDE3B's stability and expression and, thereby, impacts the antilipolytic action of insulin. Requires Mg(2+) as cofactor. Mn(2+) is required as a cofactor. Phosphorylation at Ser-295 mediates insulin-induced activation of PDE3B. In terms of tissue distribution, abundant in adipose tissues.

It is found in the membrane. It carries out the reaction a nucleoside 3',5'-cyclic phosphate + H2O = a nucleoside 5'-phosphate + H(+). The enzyme catalyses 3',5'-cyclic AMP + H2O = AMP + H(+). It catalyses the reaction 3',5'-cyclic GMP + H2O = GMP + H(+). Its activity is regulated as follows. Inhibited by cGMP. Its function is as follows. Cyclic nucleotide phosphodiesterase with a dual-specificity for the second messengers cAMP and cGMP, which are key regulators of many important physiological process. Regulates angiogenesis by inhibiting the cAMP-dependent guanine nucleotide exchange factor RAPGEF3 and downstream phosphatidylinositol 3-kinase gamma-mediated signaling. Controls cardiac contractility by reducing cAMP concentration in cardiocytes. The protein is cGMP-inhibited 3',5'-cyclic phosphodiesterase 3B of Homo sapiens (Human).